A 348-amino-acid polypeptide reads, in one-letter code: Anthranilate phosphoribosyltransferase (348 aa).

Residues Gly81, 84-85, 91-94, 109-117, and Ser121 each bind 5-phospho-alpha-D-ribose 1-diphosphate; these read GD, NVST, and KHGNRAVSG. Gly81 is a binding site for anthranilate. Ser93 is a binding site for Mg(2+). Asn112 is an anthranilate binding site. Arg167 lines the anthranilate pocket. Residues Asp226 and Glu227 each contribute to the Mg(2+) site.

It belongs to the anthranilate phosphoribosyltransferase family. Homodimer. Mg(2+) is required as a cofactor.

It catalyses the reaction N-(5-phospho-beta-D-ribosyl)anthranilate + diphosphate = 5-phospho-alpha-D-ribose 1-diphosphate + anthranilate. The protein operates within amino-acid biosynthesis; L-tryptophan biosynthesis; L-tryptophan from chorismate: step 2/5. Catalyzes the transfer of the phosphoribosyl group of 5-phosphorylribose-1-pyrophosphate (PRPP) to anthranilate to yield N-(5'-phosphoribosyl)-anthranilate (PRA). The protein is Anthranilate phosphoribosyltransferase of Stutzerimonas stutzeri (strain A1501) (Pseudomonas stutzeri).